The chain runs to 466 residues: Asparagine--tRNA ligase (466 aa).

Belongs to the class-II aminoacyl-tRNA synthetase family. Homodimer.

It is found in the cytoplasm. It catalyses the reaction tRNA(Asn) + L-asparagine + ATP = L-asparaginyl-tRNA(Asn) + AMP + diphosphate + H(+). The polypeptide is Asparagine--tRNA ligase (Salmonella typhimurium (strain LT2 / SGSC1412 / ATCC 700720)).